The primary structure comprises 183 residues: Fetal and adult testis-expressed transcript protein (183 aa).

Positions 42–66 are disordered; that stretch reads SRSRGASQKKQKLEQKAAGSASAKR. A helical membrane pass occupies residues 163–181; sequence TLIIAVLVSASIANLWLWM.

In terms of assembly, interacts with BIK and RNF183. Interacts with IMMT/MIC60and EMD. Testis-specific in fetus (aged from 6 to 11 weeks). In adult, expressed predominantly in testis, with some expression in lung, heart, kidney, adrenal gland and whole brain. Highly expressed in certain types of cancer tissues such as hepatocellular carcinoma, colon and gastric cancer. Weakly expressed in normal pancreas.

It localises to the mitochondrion. Its subcellular location is the mitochondrion outer membrane. The protein resides in the endoplasmic reticulum membrane. Functionally, involved in the regulation of endoplasmic reticulum (ER)-mitochondria coupling. Negatively regulates the ER-mitochondria distance and Ca(2+) transfer from ER to mitochondria possibly implicating it in the regulation of apoptosis. May collaborate with RNF183 to restrain BIK protein levels thus regulating apoptotic signaling. In Homo sapiens (Human), this protein is Fetal and adult testis-expressed transcript protein (FATE1).